The primary structure comprises 90 residues: Cell division topological specificity factor (90 aa).

A disordered region spans residues 1–21 (MAGFWSKIFGNDEKPSSAQTA). The segment covering 10–21 (GNDEKPSSAQTA) has biased composition (basic and acidic residues).

This sequence belongs to the MinE family.

Prevents the cell division inhibition by proteins MinC and MinD at internal division sites while permitting inhibition at polar sites. This ensures cell division at the proper site by restricting the formation of a division septum at the midpoint of the long axis of the cell. In Acinetobacter baylyi (strain ATCC 33305 / BD413 / ADP1), this protein is Cell division topological specificity factor.